The primary structure comprises 209 residues: MKRLWDISPPVSAASPVFPGDTPYQQHWKWSLTPDCPVNVSEIRLSPHIGAHADAPLHYSNGAPAIGAVPLEPFLGPCRVIHALDCGPLILPEHLRHAADGLPPRVLVRTAEHAALDWWTDDFSAYAPHTIEWLAERGVVLIGLDTPSIDPASSKTLDSHHVILRRDMRVLENLLLDDVAEGDYELIALPLALAQADASPVRAILRELG.

Phe-18 is a substrate binding site. Residues His-48, His-52, and Asp-54 each contribute to the Zn(2+) site. The active-site Proton donor/acceptor is the His-58. Residues His-160 and Glu-172 each contribute to the Zn(2+) site.

The protein belongs to the Cyclase 1 superfamily. KynB family. In terms of assembly, homodimer. The cofactor is Zn(2+).

It carries out the reaction N-formyl-L-kynurenine + H2O = L-kynurenine + formate + H(+). It functions in the pathway amino-acid degradation; L-tryptophan degradation via kynurenine pathway; L-kynurenine from L-tryptophan: step 2/2. Functionally, catalyzes the hydrolysis of N-formyl-L-kynurenine to L-kynurenine, the second step in the kynurenine pathway of tryptophan degradation. This is Kynurenine formamidase from Bordetella petrii (strain ATCC BAA-461 / DSM 12804 / CCUG 43448).